The following is a 330-amino-acid chain: Ketol-acid reductoisomerase (NADP(+)) (330 aa).

Residues 2–182 (ARLYYDTDAN…GGTRAGILET (181 aa)) enclose the KARI N-terminal Rossmann domain. Residues 25-28 (YGSQ), Ser51, Ser53, and 83-86 (DEVQ) each bind NADP(+). Residue His108 is part of the active site. Gly134 is an NADP(+) binding site. A KARI C-terminal knotted domain is found at 183-328 (TFREETETDL…RELRAMFSWL (146 aa)). 4 residues coordinate Mg(2+): Asp191, Glu195, Glu227, and Glu231. Ser252 is a binding site for substrate.

The protein belongs to the ketol-acid reductoisomerase family. It depends on Mg(2+) as a cofactor.

It carries out the reaction (2R)-2,3-dihydroxy-3-methylbutanoate + NADP(+) = (2S)-2-acetolactate + NADPH + H(+). The enzyme catalyses (2R,3R)-2,3-dihydroxy-3-methylpentanoate + NADP(+) = (S)-2-ethyl-2-hydroxy-3-oxobutanoate + NADPH + H(+). The protein operates within amino-acid biosynthesis; L-isoleucine biosynthesis; L-isoleucine from 2-oxobutanoate: step 2/4. Its pathway is amino-acid biosynthesis; L-valine biosynthesis; L-valine from pyruvate: step 2/4. Involved in the biosynthesis of branched-chain amino acids (BCAA). Catalyzes an alkyl-migration followed by a ketol-acid reduction of (S)-2-acetolactate (S2AL) to yield (R)-2,3-dihydroxy-isovalerate. In the isomerase reaction, S2AL is rearranged via a Mg-dependent methyl migration to produce 3-hydroxy-3-methyl-2-ketobutyrate (HMKB). In the reductase reaction, this 2-ketoacid undergoes a metal-dependent reduction by NADPH to yield (R)-2,3-dihydroxy-isovalerate. This chain is Ketol-acid reductoisomerase (NADP(+)), found in Synechococcus sp. (strain JA-2-3B'a(2-13)) (Cyanobacteria bacterium Yellowstone B-Prime).